Reading from the N-terminus, the 578-residue chain is Proline--tRNA ligase (578 aa).

Belongs to the class-II aminoacyl-tRNA synthetase family. ProS type 1 subfamily. As to quaternary structure, homodimer.

It localises to the cytoplasm. The catalysed reaction is tRNA(Pro) + L-proline + ATP = L-prolyl-tRNA(Pro) + AMP + diphosphate. Its function is as follows. Catalyzes the attachment of proline to tRNA(Pro) in a two-step reaction: proline is first activated by ATP to form Pro-AMP and then transferred to the acceptor end of tRNA(Pro). As ProRS can inadvertently accommodate and process non-cognate amino acids such as alanine and cysteine, to avoid such errors it has two additional distinct editing activities against alanine. One activity is designated as 'pretransfer' editing and involves the tRNA(Pro)-independent hydrolysis of activated Ala-AMP. The other activity is designated 'posttransfer' editing and involves deacylation of mischarged Ala-tRNA(Pro). The misacylated Cys-tRNA(Pro) is not edited by ProRS. The sequence is that of Proline--tRNA ligase from Burkholderia lata (strain ATCC 17760 / DSM 23089 / LMG 22485 / NCIMB 9086 / R18194 / 383).